The primary structure comprises 185 residues: MINEIKKEAQERMGKTLEALGHAFAKIRTGRAHPSILDSVMVSYYGADTPLRQVANVTVEDSRTLALAVFDKSMIQAVEKAIMTSDLGLNPATAGTTIRVPMPALTEETRKGYTKQARAEAEQARVSVRNIRRDALAQLKDLQKEKEISEDEERRAGDDVQKLTDKFIGEIEKALEAKEADLMAV.

It belongs to the RRF family.

It localises to the cytoplasm. Responsible for the release of ribosomes from messenger RNA at the termination of protein biosynthesis. May increase the efficiency of translation by recycling ribosomes from one round of translation to another. The sequence is that of Ribosome-recycling factor from Pseudomonas aeruginosa (strain LESB58).